The sequence spans 248 residues: Adenosylcobinamide-GDP ribazoletransferase (248 aa).

A run of 7 helical transmembrane segments spans residues 24–44, 70–90, 106–126, 134–154, 168–188, 189–209, and 228–248; these read EINLKKGSALLPFVGVIIGAW, IIITGGFHVDALADTADGLFS, VGANGVIAICFYFLFYGALFL, IGWLFFVLPIVAKGVTMLLFA, IFLGVPWWPIVIAQVIVLVAL, GAFFSYIGVIAYAGVILFTII, and AGGQMGQLICLFCLVLLWGLI.

It belongs to the CobS family. It depends on Mg(2+) as a cofactor.

It is found in the cell membrane. The catalysed reaction is alpha-ribazole + adenosylcob(III)inamide-GDP = adenosylcob(III)alamin + GMP + H(+). The enzyme catalyses alpha-ribazole 5'-phosphate + adenosylcob(III)inamide-GDP = adenosylcob(III)alamin 5'-phosphate + GMP + H(+). The protein operates within cofactor biosynthesis; adenosylcobalamin biosynthesis; adenosylcobalamin from cob(II)yrinate a,c-diamide: step 7/7. Functionally, joins adenosylcobinamide-GDP and alpha-ribazole to generate adenosylcobalamin (Ado-cobalamin). Also synthesizes adenosylcobalamin 5'-phosphate from adenosylcobinamide-GDP and alpha-ribazole 5'-phosphate. This Listeria monocytogenes serotype 4a (strain HCC23) protein is Adenosylcobinamide-GDP ribazoletransferase.